Consider the following 357-residue polypeptide: Isopentenyl-diphosphate delta-isomerase (357 aa).

12-13 (RK) is a binding site for substrate. FMN-binding positions include S70, 71–73 (SMT), S101, and N130. 101–103 (SMR) lines the substrate pocket. Q165 lines the substrate pocket. Residue E166 participates in Mg(2+) binding. FMN contacts are provided by residues K197 and 310 to 311 (AR).

This sequence belongs to the IPP isomerase type 2 family. Homooctamer. Dimer of tetramers. Requires FMN as cofactor. The cofactor is NADPH. It depends on Mg(2+) as a cofactor.

The protein resides in the cytoplasm. The catalysed reaction is isopentenyl diphosphate = dimethylallyl diphosphate. Its function is as follows. Involved in the biosynthesis of isoprenoids. Catalyzes the 1,3-allylic rearrangement of the homoallylic substrate isopentenyl (IPP) to its allylic isomer, dimethylallyl diphosphate (DMAPP). The chain is Isopentenyl-diphosphate delta-isomerase from Pelodictyon phaeoclathratiforme (strain DSM 5477 / BU-1).